A 488-amino-acid polypeptide reads, in one-letter code: Glutamyl-tRNA(Gln) amidotransferase subunit A (488 aa).

Residues lysine 77 and serine 152 each act as charge relay system in the active site. Serine 176 (acyl-ester intermediate) is an active-site residue.

Belongs to the amidase family. GatA subfamily. Heterotrimer of A, B and C subunits.

The catalysed reaction is L-glutamyl-tRNA(Gln) + L-glutamine + ATP + H2O = L-glutaminyl-tRNA(Gln) + L-glutamate + ADP + phosphate + H(+). Allows the formation of correctly charged Gln-tRNA(Gln) through the transamidation of misacylated Glu-tRNA(Gln) in organisms which lack glutaminyl-tRNA synthetase. The reaction takes place in the presence of glutamine and ATP through an activated gamma-phospho-Glu-tRNA(Gln). The chain is Glutamyl-tRNA(Gln) amidotransferase subunit A from Streptococcus pyogenes serotype M5 (strain Manfredo).